Consider the following 151-residue polypeptide: SsrA-binding protein (151 aa).

The protein belongs to the SmpB family.

It localises to the cytoplasm. Functionally, required for rescue of stalled ribosomes mediated by trans-translation. Binds to transfer-messenger RNA (tmRNA), required for stable association of tmRNA with ribosomes. tmRNA and SmpB together mimic tRNA shape, replacing the anticodon stem-loop with SmpB. tmRNA is encoded by the ssrA gene; the 2 termini fold to resemble tRNA(Ala) and it encodes a 'tag peptide', a short internal open reading frame. During trans-translation Ala-aminoacylated tmRNA acts like a tRNA, entering the A-site of stalled ribosomes, displacing the stalled mRNA. The ribosome then switches to translate the ORF on the tmRNA; the nascent peptide is terminated with the 'tag peptide' encoded by the tmRNA and targeted for degradation. The ribosome is freed to recommence translation, which seems to be the essential function of trans-translation. This chain is SsrA-binding protein, found in Chlamydia pneumoniae (Chlamydophila pneumoniae).